Reading from the N-terminus, the 40-residue chain is Photosystem II reaction center protein J (40 aa).

A helical membrane pass occupies residues 8 to 28 (IPLWMIGTLAGILVISLIGIF).

Belongs to the PsbJ family. As to quaternary structure, PSII is composed of 1 copy each of membrane proteins PsbA, PsbB, PsbC, PsbD, PsbE, PsbF, PsbH, PsbI, PsbJ, PsbK, PsbL, PsbM, PsbT, PsbX, PsbY, PsbZ, Psb30/Ycf12, at least 3 peripheral proteins of the oxygen-evolving complex and a large number of cofactors. It forms dimeric complexes.

Its subcellular location is the plastid membrane. In terms of biological role, one of the components of the core complex of photosystem II (PSII). PSII is a light-driven water:plastoquinone oxidoreductase that uses light energy to abstract electrons from H(2)O, generating O(2) and a proton gradient subsequently used for ATP formation. It consists of a core antenna complex that captures photons, and an electron transfer chain that converts photonic excitation into a charge separation. The polypeptide is Photosystem II reaction center protein J (Cuscuta gronovii (Common dodder)).